A 519-amino-acid polypeptide reads, in one-letter code: Putative lipase ATG15 (519 aa).

Residues 1-5 are Cytoplasmic-facing; that stretch reads MYIPG. Residues 6 to 26 form a helical; Signal-anchor for type II membrane protein membrane-spanning segment; the sequence is PLRLSSYLLPFLSSPSPPAQS. Over 27 to 519 the chain is Lumenal; that stretch reads SPDTRTISFK…CYKWEFGEWN (493 aa). N-linked (GlcNAc...) asparagine glycans are attached at residues Asn-48, Asn-133, Asn-196, Asn-220, Asn-302, and Asn-309. Residue Ser-318 is the Charge relay system of the active site. N-linked (GlcNAc...) asparagine glycosylation is present at Asn-361. A disordered region spans residues 481–502; it reads RRGPKRQPGGEDPKHGGVPKPV.

The protein belongs to the AB hydrolase superfamily. Lipase family. Binds to both phosphatidylinositol (PI) and phosphatidylinositol 3,5-bisphosphate (PIP2).

The protein localises to the endosome. It localises to the multivesicular body membrane. Its subcellular location is the prevacuolar compartment membrane. It carries out the reaction a triacylglycerol + H2O = a diacylglycerol + a fatty acid + H(+). Lipase which is essential for lysis of subvacuolar cytoplasm to vacuole targeted bodies and intravacuolar autophagic bodies. Involved in the lysis of intravacuolar multivesicular body (MVB) vesicles. The intravacuolar membrane disintegration by ATG15 is critical to life span extension. This is Putative lipase ATG15 (ATG15) from Cryptococcus neoformans var. neoformans serotype D (strain B-3501A) (Filobasidiella neoformans).